The chain runs to 80 residues: Small ribosomal subunit protein uS17 (80 aa).

Belongs to the universal ribosomal protein uS17 family. As to quaternary structure, part of the 30S ribosomal subunit.

In terms of biological role, one of the primary rRNA binding proteins, it binds specifically to the 5'-end of 16S ribosomal RNA. In Cereibacter sphaeroides (strain ATCC 17025 / ATH 2.4.3) (Rhodobacter sphaeroides), this protein is Small ribosomal subunit protein uS17.